A 279-amino-acid chain; its full sequence is Acetylglutamate kinase (279 aa).

Residues 64-65 (GG), Arg-86, and Asn-177 contribute to the substrate site.

It belongs to the acetylglutamate kinase family. ArgB subfamily.

It localises to the cytoplasm. The enzyme catalyses N-acetyl-L-glutamate + ATP = N-acetyl-L-glutamyl 5-phosphate + ADP. The protein operates within amino-acid biosynthesis; L-arginine biosynthesis; N(2)-acetyl-L-ornithine from L-glutamate: step 2/4. In terms of biological role, catalyzes the ATP-dependent phosphorylation of N-acetyl-L-glutamate. The protein is Acetylglutamate kinase of Campylobacter jejuni subsp. jejuni serotype O:6 (strain 81116 / NCTC 11828).